The sequence spans 44 residues: Cuticle protein CP459 (44 aa).

Repeat copies occupy residues 3-20 (LLKG…KRLL) and 27-44 (VLLT…NVQF).

Calcified shell.

The protein is Cuticle protein CP459 of Cancer pagurus (Rock crab).